We begin with the raw amino-acid sequence, 431 residues long: Serine hydroxymethyltransferase 3 (431 aa).

Residues leucine 131 and 135 to 137 (GHL) contribute to the (6S)-5,6,7,8-tetrahydrofolate site. Lysine 240 carries the post-translational modification N6-(pyridoxal phosphate)lysine.

Belongs to the SHMT family. In terms of assembly, homodimer. Requires pyridoxal 5'-phosphate as cofactor.

It localises to the cytoplasm. The enzyme catalyses (6R)-5,10-methylene-5,6,7,8-tetrahydrofolate + glycine + H2O = (6S)-5,6,7,8-tetrahydrofolate + L-serine. It participates in one-carbon metabolism; tetrahydrofolate interconversion. Its pathway is amino-acid biosynthesis; glycine biosynthesis; glycine from L-serine: step 1/1. Its function is as follows. Catalyzes the reversible interconversion of serine and glycine with tetrahydrofolate (THF) serving as the one-carbon carrier. This reaction serves as the major source of one-carbon groups required for the biosynthesis of purines, thymidylate, methionine, and other important biomolecules. Also exhibits THF-independent aldolase activity toward beta-hydroxyamino acids, producing glycine and aldehydes, via a retro-aldol mechanism. The sequence is that of Serine hydroxymethyltransferase 3 from Colwellia psychrerythraea (strain 34H / ATCC BAA-681) (Vibrio psychroerythus).